The following is a 333-amino-acid chain: tRNA N6-adenosine threonylcarbamoyltransferase (333 aa).

Residues His-111 and His-115 each coordinate Fe cation. Residues 134–138 (VVSGG), Asp-167, Gly-180, Asp-184, and Asn-273 contribute to the substrate site. Asp-302 is a binding site for Fe cation.

Belongs to the KAE1 / TsaD family. Fe(2+) is required as a cofactor.

It is found in the cytoplasm. It catalyses the reaction L-threonylcarbamoyladenylate + adenosine(37) in tRNA = N(6)-L-threonylcarbamoyladenosine(37) in tRNA + AMP + H(+). Functionally, required for the formation of a threonylcarbamoyl group on adenosine at position 37 (t(6)A37) in tRNAs that read codons beginning with adenine. Is involved in the transfer of the threonylcarbamoyl moiety of threonylcarbamoyl-AMP (TC-AMP) to the N6 group of A37, together with TsaE and TsaB. TsaD likely plays a direct catalytic role in this reaction. In Anaeromyxobacter sp. (strain Fw109-5), this protein is tRNA N6-adenosine threonylcarbamoyltransferase.